A 445-amino-acid polypeptide reads, in one-letter code: Trigger factor (445 aa).

Residues 163-248 (GDTVVIDYVG…IHEVKVKELP (86 aa)) form the PPIase FKBP-type domain. Positions 425 to 445 (KEVESAKDDADKEASDAKADK) are disordered.

This sequence belongs to the FKBP-type PPIase family. Tig subfamily.

The protein resides in the cytoplasm. It carries out the reaction [protein]-peptidylproline (omega=180) = [protein]-peptidylproline (omega=0). Its function is as follows. Involved in protein export. Acts as a chaperone by maintaining the newly synthesized protein in an open conformation. Functions as a peptidyl-prolyl cis-trans isomerase. This chain is Trigger factor, found in Lacticaseibacillus casei (strain BL23) (Lactobacillus casei).